We begin with the raw amino-acid sequence, 582 residues long: V-type ATP synthase alpha chain (582 aa).

Residue 231-238 (GPFGSGKT) coordinates ATP.

Belongs to the ATPase alpha/beta chains family.

It carries out the reaction ATP + H2O + 4 H(+)(in) = ADP + phosphate + 5 H(+)(out). In terms of biological role, produces ATP from ADP in the presence of a proton gradient across the membrane. The V-type alpha chain is a catalytic subunit. In Deinococcus deserti (strain DSM 17065 / CIP 109153 / LMG 22923 / VCD115), this protein is V-type ATP synthase alpha chain.